Consider the following 350-residue polypeptide: UDP-N-acetylenolpyruvoylglucosamine reductase (350 aa).

Positions 24–195 (HVEATARWLL…VAVEFNLPLL (172 aa)) constitute an FAD-binding PCMH-type domain. Arg172 is a catalytic residue. The active-site Proton donor is the Ser245. Residue Glu342 is part of the active site.

The protein belongs to the MurB family. FAD is required as a cofactor.

Its subcellular location is the cytoplasm. The enzyme catalyses UDP-N-acetyl-alpha-D-muramate + NADP(+) = UDP-N-acetyl-3-O-(1-carboxyvinyl)-alpha-D-glucosamine + NADPH + H(+). It functions in the pathway cell wall biogenesis; peptidoglycan biosynthesis. Its function is as follows. Cell wall formation. This is UDP-N-acetylenolpyruvoylglucosamine reductase from Xanthomonas euvesicatoria pv. vesicatoria (strain 85-10) (Xanthomonas campestris pv. vesicatoria).